The chain runs to 208 residues: Protein GrpE (208 aa).

Residues 1 to 27 (MERMNQSRKVPIHDAAEESSAEAHETQ) are compositionally biased toward basic and acidic residues. A disordered region spans residues 1-65 (MERMNQSRKV…AEEAQEEEAA (65 aa)). Residues 45–64 (MAEEAVEQAQDAEEAQEEEA) show a composition bias toward acidic residues.

Belongs to the GrpE family. As to quaternary structure, homodimer.

It localises to the cytoplasm. In terms of biological role, participates actively in the response to hyperosmotic and heat shock by preventing the aggregation of stress-denatured proteins, in association with DnaK and GrpE. It is the nucleotide exchange factor for DnaK and may function as a thermosensor. Unfolded proteins bind initially to DnaJ; upon interaction with the DnaJ-bound protein, DnaK hydrolyzes its bound ATP, resulting in the formation of a stable complex. GrpE releases ADP from DnaK; ATP binding to DnaK triggers the release of the substrate protein, thus completing the reaction cycle. Several rounds of ATP-dependent interactions between DnaJ, DnaK and GrpE are required for fully efficient folding. The sequence is that of Protein GrpE from Desulfatibacillum aliphaticivorans.